Consider the following 400-residue polypeptide: DNA polymerase IV (400 aa).

Positions 8 to 191 (ILLCDANSFF…LPVRELFGIG (184 aa)) constitute a UmuC domain. Positions 12 and 109 each coordinate Mg(2+). Glu-110 is a catalytic residue.

Belongs to the DNA polymerase type-Y family. As to quaternary structure, monomer. Mg(2+) serves as cofactor.

It localises to the cytoplasm. It catalyses the reaction DNA(n) + a 2'-deoxyribonucleoside 5'-triphosphate = DNA(n+1) + diphosphate. Poorly processive, error-prone DNA polymerase involved in untargeted mutagenesis. Copies undamaged DNA at stalled replication forks, which arise in vivo from mismatched or misaligned primer ends. These misaligned primers can be extended by PolIV. Exhibits no 3'-5' exonuclease (proofreading) activity. May be involved in translesional synthesis, in conjunction with the beta clamp from PolIII. In Moorella thermoacetica (strain ATCC 39073 / JCM 9320), this protein is DNA polymerase IV.